Consider the following 194-residue polypeptide: Leucyl/phenylalanyl-tRNA--protein transferase (194 aa).

It belongs to the L/F-transferase family.

The protein resides in the cytoplasm. It carries out the reaction N-terminal L-lysyl-[protein] + L-leucyl-tRNA(Leu) = N-terminal L-leucyl-L-lysyl-[protein] + tRNA(Leu) + H(+). It catalyses the reaction N-terminal L-arginyl-[protein] + L-leucyl-tRNA(Leu) = N-terminal L-leucyl-L-arginyl-[protein] + tRNA(Leu) + H(+). The catalysed reaction is L-phenylalanyl-tRNA(Phe) + an N-terminal L-alpha-aminoacyl-[protein] = an N-terminal L-phenylalanyl-L-alpha-aminoacyl-[protein] + tRNA(Phe). Its function is as follows. Functions in the N-end rule pathway of protein degradation where it conjugates Leu, Phe and, less efficiently, Met from aminoacyl-tRNAs to the N-termini of proteins containing an N-terminal arginine or lysine. This is Leucyl/phenylalanyl-tRNA--protein transferase from Pelodictyon phaeoclathratiforme (strain DSM 5477 / BU-1).